Reading from the N-terminus, the 74-residue chain is Pelophylaxin-3 (74 aa).

Positions 1 to 22 are cleaved as a signal peptide; the sequence is MFTLKKSLLLVFFLGTISLSLC. A propeptide spanning residues 23-39 is cleaved from the precursor; the sequence is EDERNADEDDGEMTEEV. A disulfide bond links C68 and C74.

As to expression, expressed by the skin glands.

It is found in the secreted. Its function is as follows. Antimicrobial peptide. The polypeptide is Pelophylaxin-3 (Pelophylax fukienensis (Fukien gold-striped pond frog)).